An 815-amino-acid chain; its full sequence is Ent-sandaracopimara-8(14),15-diene synthase, chloroplastic (815 aa).

Residues 1–38 constitute a chloroplast transit peptide; the sequence is MLPSSICSMGQIPRTSPHYYGMLPKQMSKGHPPMVTRA. Mg(2+) is bound by residues Asp-550, Asp-554, Asn-696, Thr-700, and Glu-704. The short motif at 550 to 554 is the DDXXD motif element; it reads DDFFD.

It belongs to the terpene synthase family. Mg(2+) is required as a cofactor.

It localises to the plastid. The protein resides in the chloroplast. It catalyses the reaction ent-copalyl diphosphate = ent-sandaracopimara-8(14),15-diene + diphosphate. The catalysed reaction is 9alpha-copalyl diphosphate = (12E)-9alpha-labda-8(17),12,14-triene + diphosphate. Its function is as follows. Involved in the biosynthesis of oryzalexin A-F phytoalexins. Catalyzes the conversion of ent-copalyl diphosphate to the phytoalexin precursor ent-sandaracopimaradiene. The polypeptide is Ent-sandaracopimara-8(14),15-diene synthase, chloroplastic (Oryza sativa subsp. japonica (Rice)).